Consider the following 292-residue polypeptide: S-methyl-5'-thioadenosine phosphorylase (292 aa).

Residues S11, 53-54 (RH), and 86-87 (SA) contribute to the phosphate site. Position 184 (M184) interacts with substrate. T185 lines the phosphate pocket. Residue 208–210 (DYD) participates in substrate binding.

The protein belongs to the PNP/MTAP phosphorylase family. MTAP subfamily. As to quaternary structure, homohexamer. Dimer of a homotrimer.

The enzyme catalyses S-methyl-5'-thioadenosine + phosphate = 5-(methylsulfanyl)-alpha-D-ribose 1-phosphate + adenine. Its pathway is amino-acid biosynthesis; L-methionine biosynthesis via salvage pathway; S-methyl-5-thio-alpha-D-ribose 1-phosphate from S-methyl-5'-thioadenosine (phosphorylase route): step 1/1. Functionally, catalyzes the reversible phosphorylation of S-methyl-5'-thioadenosine (MTA) to adenine and 5-methylthioribose-1-phosphate. Involved in the breakdown of MTA, a major by-product of polyamine biosynthesis. Responsible for the first step in the methionine salvage pathway after MTA has been generated from S-adenosylmethionine. Has broad substrate specificity with 6-aminopurine nucleosides as preferred substrates. The chain is S-methyl-5'-thioadenosine phosphorylase from Koribacter versatilis (strain Ellin345).